Consider the following 308-residue polypeptide: Coenzyme PQQ synthesis protein B (308 aa).

Belongs to the PqqB family.

The protein operates within cofactor biosynthesis; pyrroloquinoline quinone biosynthesis. Functionally, may be involved in the transport of PQQ or its precursor to the periplasm. This Klebsiella pneumoniae subsp. pneumoniae (strain ATCC 700721 / MGH 78578) protein is Coenzyme PQQ synthesis protein B.